A 282-amino-acid polypeptide reads, in one-letter code: Major surface antigen 4 (282 aa).

The first 29 residues, Met-1–Ala-29, serve as a signal peptide directing secretion.

This sequence belongs to the surface antigen msp4 family.

The chain is Major surface antigen 4 (msp4) from Anaplasma marginale.